We begin with the raw amino-acid sequence, 166 residues long: MKYTSYFLALLLCGLLGFSGSYGQGQFFREIENLKEYFNASSPDVAKGGPLFSEILKNWKDESDKKIIQSQIVSFYFKLFENLKDNQVIQRSMDIIKQDMFQKFLNGSSEKLEDFKKLIQIPVDDLQIQRKAINELIKVMNDLSPKSNLRKRKRSQNLFRGRRASM.

An N-terminal signal peptide occupies residues 1–23 (MKYTSYFLALLLCGLLGFSGSYG). Q24 is subject to Pyrrolidone carboxylic acid. N39 and N106 each carry an N-linked (GlcNAc...) asparagine glycan.

Belongs to the type II (or gamma) interferon family. Homodimer. Interacts with IFNGR1 (via extracellular domain); this interaction promotes IFNGR1 dimerization. In terms of tissue distribution, released primarily from activated T lymphocytes.

It localises to the secreted. Type II interferon produced by immune cells such as T-cells and NK cells that plays crucial roles in antimicrobial, antiviral, and antitumor responses by activating effector immune cells and enhancing antigen presentation. Primarily signals through the JAK-STAT pathway after interaction with its receptor IFNGR1 to affect gene regulation. Upon IFNG binding, IFNGR1 intracellular domain opens out to allow association of downstream signaling components JAK2, JAK1 and STAT1, leading to STAT1 activation, nuclear translocation and transcription of IFNG-regulated genes. Many of the induced genes are transcription factors such as IRF1 that are able to further drive regulation of a next wave of transcription. Plays a role in class I antigen presentation pathway by inducing a replacement of catalytic proteasome subunits with immunoproteasome subunits. In turn, increases the quantity, quality, and repertoire of peptides for class I MHC loading. Increases the efficiency of peptide generation also by inducing the expression of activator PA28 that associates with the proteasome and alters its proteolytic cleavage preference. Up-regulates as well MHC II complexes on the cell surface by promoting expression of several key molecules such as cathepsins B/CTSB, H/CTSH, and L/CTSL. Participates in the regulation of hematopoietic stem cells during development and under homeostatic conditions by affecting their development, quiescence, and differentiation. This chain is Interferon gamma (IFNG), found in Bos taurus (Bovine).